A 467-amino-acid chain; its full sequence is MTVRTRFAPSPTGFLHIGGARTALFSWAYARKHAGSFILRIEDTDVARSTPEAVQAILDGMRWLGLDWDEGPFYQMQRMDRYKVVIGKLLDEGHAYHCYCSREELDALREQQMREGKKPRYDGRWRPESGKVLPAIPADIPPVVRFKNPRAGNVVWNDLVKGEISIANEELDDLIIARADGTPTYNFCVVVDDWDMGITHVIRGDDHVNNTPRQINLLQALGATIPQYAHLSMILGDDGQKLSKRHGAVSVMQYHEDGYLPEAVLNYLARLGWSHGDDEIFTMSQFCEWFGFDHITPSAAQFNTEKLNWLNAHYIKQAELGRLAVDIAKRLADAGIQVSDRVDLQGVIALYRDRASTLNQIAGSIAYFYRRPNIEASLLEKYLTPEILPVLTALLEELKDIEWTREKLHEVIQGAVTQNALKFPKVAMPLRVMLTGSDQSPSIDAVMVLLGQEESLARMRSVLQVNV.

A 'HIGH' region motif is present at residues Pro-9–Gly-19. Positions Lys-241 to Arg-245 match the 'KMSKS' region motif. Lys-244 serves as a coordination point for ATP.

This sequence belongs to the class-I aminoacyl-tRNA synthetase family. Glutamate--tRNA ligase type 1 subfamily. In terms of assembly, monomer.

The protein localises to the cytoplasm. It carries out the reaction tRNA(Glu) + L-glutamate + ATP = L-glutamyl-tRNA(Glu) + AMP + diphosphate. Catalyzes the attachment of glutamate to tRNA(Glu) in a two-step reaction: glutamate is first activated by ATP to form Glu-AMP and then transferred to the acceptor end of tRNA(Glu). This chain is Glutamate--tRNA ligase, found in Methylobacillus flagellatus (strain ATCC 51484 / DSM 6875 / VKM B-1610 / KT).